The primary structure comprises 91 residues: CRISPR-associated endoribonuclease Cas2 2 (91 aa).

A Mg(2+)-binding site is contributed by Asp-10.

Belongs to the CRISPR-associated endoribonuclease Cas2 protein family. As to quaternary structure, homodimer, forms a heterotetramer with a Cas1 homodimer. It depends on Mg(2+) as a cofactor.

In terms of biological role, CRISPR (clustered regularly interspaced short palindromic repeat), is an adaptive immune system that provides protection against mobile genetic elements (viruses, transposable elements and conjugative plasmids). CRISPR clusters contain sequences complementary to antecedent mobile elements and target invading nucleic acids. CRISPR clusters are transcribed and processed into CRISPR RNA (crRNA). Functions as a ssRNA-specific endoribonuclease. Involved in the integration of spacer DNA into the CRISPR cassette. The sequence is that of CRISPR-associated endoribonuclease Cas2 2 from Thermodesulfovibrio yellowstonii (strain ATCC 51303 / DSM 11347 / YP87).